The following is a 264-amino-acid chain: MRGVLVTLAVLFLTGTQARSFWQHDEPQTPLDRIRDMVDVYLETVKASGKDAIAQFESSAVGKQLDLKLADNLDTLSAAAAKLREDMAPYYKEVREMWLKDTEALRAELTKDLEEVKEKIRPFLDQFSAKWTEELEQYRQRLTPVAQELKELTKQKVELMQAKLTPVAEEARDRLRGHVEELRKNLAPYSDELRQKLSQKLEEIREKGIPQASEYQAKVMEQLSNLREKMTPLVQEFRERLTPYAENLKNRLISFLDELQKSVA.

An N-terminal signal peptide occupies residues 1–18; that stretch reads MRGVLVTLAVLFLTGTQA. 2 tandem repeats follow at residues 67-88 and 89-110. The segment at 67–264 is 10 X approximate tandem repeats; it reads LKLADNLDTL…FLDELQKSVA (198 aa). One copy of the 3; half-length repeat lies at 111-121; it reads KDLEEVKEKIR. 5 consecutive repeat copies span residues 122-143, 144-165, 166-187, 188-209, and 210-231. The 9; half-length repeat unit spans residues 232–242; that stretch reads PLVQEFRERLT. Copy 10 of the repeat occupies 243–264; that stretch reads PYAENLKNRLISFLDELQKSVA.

This sequence belongs to the apolipoprotein A1/A4/E family. In terms of assembly, homodimer. In terms of tissue distribution, major protein of plasma HDL, also found in chylomicrons.

The protein localises to the secreted. In terms of biological role, participates in the reverse transport of cholesterol from tissues to the liver for excretion by promoting cholesterol efflux from tissues and by acting as a cofactor for the lecithin cholesterol acyltransferase (LCAT). This is Apolipoprotein A-I (APOA1) from Gallus gallus (Chicken).